A 524-amino-acid chain; its full sequence is MDDGDLGNNHHNFLGGAGNRLSAESLPLIDTRLLSQSELRALSQCSSLSPSSSASLAASAGGDDDLTPKIDRSVFNESAGSRKQTFLRLRLARHPQPPEEPPSPQRQRDDSSREEQTQVASLLRSLFNVDSNQSKEEEDEGEEELEDNEGQIHYNSYVYQRPNLDSIQNVLIQGTSGNKIKRKRGRPRKIRNPSEENEVLDLTGEASTYVFVDKTSSNLGMVSRVGSSGISLDSNSVKRKRGRPPKNKEEIMNLEKRDSAIVNISAFDKEELVVNLENREGTIVDLSALASVSEDPYEEELRRITVGLKTKEEILGFLEQLNGEWVNIGKKKKVVNACDYGGYLPRGWRLMLYIKRKGSNLLLACRRYISPDGQQFETCKEVSTYLRSLLESPSKNQHYYLQSDNKTLGQQPVIANESLLGNSDSMDSETMQYLESGRTSSEVFEEAKAVENGNEADRVKTSLMQKDDNADFLNGVEDNDDDMKKRDGNMENLATLSNSEMTKSLPTTTNELQQYFSSQINRVQ.

A compositionally biased stretch (low complexity) spans 45-60 (CSSLSPSSSASLAASA). Residues 45-151 (CSSLSPSSSA…EEELEDNEGQ (107 aa)) are disordered. Residues 75–84 (FNESAGSRKQ) show a composition bias toward polar residues. Positions 106–116 (RQRDDSSREEQ) are enriched in basic and acidic residues. Over residues 136–149 (EEEDEGEEELEDNE) the composition is skewed to acidic residues. Positions 334-406 (VVNACDYGGY…QHYYLQSDNK (73 aa)) constitute an MBD domain.

In terms of tissue distribution, expressed in shoot meristems, roots (vasculature and tips), hypocotyls (vasculature), cotyledons (vasculature and hydathodes), young leaves, buds, flowers and stems. Detected in stomata.

The protein resides in the nucleus. Functionally, probable transcriptional regulator. May regulates developmental traits such as flowering time. This Arabidopsis thaliana (Mouse-ear cress) protein is Methyl-CpG-binding domain-containing protein 8 (MBD8).